Consider the following 322-residue polypeptide: Peroxisomal adenine nucleotide carrier 1 (322 aa).

Solcar repeat units follow at residues 5 to 94, 104 to 184, and 202 to 298; these read LESV…FKRV, IGTK…LKQH, and LSAF…ITAT. Helical transmembrane passes span 8–28, 104–124, 158–178, 201–221, 254–274, and 286–306; these read VSEA…LYPL, IGTK…SVLI, FDGL…YTVF, VLSA…ATVL, IPGV…FKGL, and ALLL…ILAI.

This sequence belongs to the mitochondrial carrier (TC 2.A.29) family. Expressed in stamens, pollen grains, seeds, leaves, cotyledons, roots, stems, flowers, hypocotyls and siliques.

The protein resides in the peroxisome membrane. In terms of biological role, peroxisomal adenine nucleotide transporter catalyzing the counterexchange of ATP with AMP. ATP is needed by reactions that generate acyl-CoA for peroxisomal fatty acid beta-oxidation during postgerminative growth. Required for the beta-oxidation reactions involved in auxin biosynthesis and for the conversion of seed-reserved triacylglycerols into sucrose that is necessary for growth before the onset of photosynthesis. This chain is Peroxisomal adenine nucleotide carrier 1 (PNC1), found in Arabidopsis thaliana (Mouse-ear cress).